The primary structure comprises 469 residues: Adenosylhomocysteinase (469 aa).

T63, D139, and E164 together coordinate substrate. 165–167 (TTT) contributes to the NAD(+) binding site. Substrate-binding residues include K194 and D198. NAD(+) is bound by residues N199, 228-233 (GYGDVG), E251, N300, 321-323 (IGH), and N375.

This sequence belongs to the adenosylhomocysteinase family. NAD(+) serves as cofactor.

The protein localises to the cytoplasm. The catalysed reaction is S-adenosyl-L-homocysteine + H2O = L-homocysteine + adenosine. The protein operates within amino-acid biosynthesis; L-homocysteine biosynthesis; L-homocysteine from S-adenosyl-L-homocysteine: step 1/1. In terms of biological role, may play a key role in the regulation of the intracellular concentration of adenosylhomocysteine. This is Adenosylhomocysteinase from Pseudomonas syringae pv. syringae (strain B728a).